Here is a 435-residue protein sequence, read N- to C-terminus: Putative dimethyl sulfoxide reductase membrane subunit C (435 aa).

A run of 11 helical transmembrane segments spans residues 22-42 (GWLG…AYQL), 57-77 (WGLY…GLIL), 95-115 (LGVL…LPDI), 135-155 (VWDF…LWLL), 186-206 (FWTA…TGWI), 220-240 (LVAP…LLVV), 257-277 (LTSL…YLLA), 281-301 (LPHA…FLIG), 304-324 (VYFW…LATP), 333-353 (IFTA…RLVF), and 392-412 (VEIA…MAGL).

The protein belongs to the NrfD family. Probable multiprotein complex that likely consists of DmsA, DmsB and DmsC.

Its subcellular location is the cell membrane. In terms of biological role, dimethyl sulfoxide (DMSO) reductase catalyzes the reduction of dimethyl sulfoxide (DMSO) to dimethyl sulfide (DMS) during anaerobic respiration; it can also use trimethylamine N-oxide (TMAO) as terminal electron acceptor. Subunit C is proposed to be a membrane anchoring subunit. The protein is Putative dimethyl sulfoxide reductase membrane subunit C (dmsC) of Halobacterium salinarum (strain ATCC 700922 / JCM 11081 / NRC-1) (Halobacterium halobium).